A 409-amino-acid polypeptide reads, in one-letter code: DNA polymerase IV 2 (409 aa).

A UmuC domain is found at 5 to 190; sequence IFMVDMESFF…LPIECLYGVG (186 aa). 2 residues coordinate Mg(2+): Asp9 and Asp105. The active site involves Glu106.

Belongs to the DNA polymerase type-Y family. Monomer. Mg(2+) is required as a cofactor.

It is found in the cytoplasm. It catalyses the reaction DNA(n) + a 2'-deoxyribonucleoside 5'-triphosphate = DNA(n+1) + diphosphate. Its function is as follows. Poorly processive, error-prone DNA polymerase involved in untargeted mutagenesis. Copies undamaged DNA at stalled replication forks, which arise in vivo from mismatched or misaligned primer ends. These misaligned primers can be extended by PolIV. Exhibits no 3'-5' exonuclease (proofreading) activity. May be involved in translesional synthesis, in conjunction with the beta clamp from PolIII. This is DNA polymerase IV 2 (dinB2) from Halalkalibacterium halodurans (strain ATCC BAA-125 / DSM 18197 / FERM 7344 / JCM 9153 / C-125) (Bacillus halodurans).